The chain runs to 506 residues: MTAQSAQSDNQVLLTMTNVSKSFPGVKALDKANLTVKSHSVHALMGENGAGKSTLLKCLFGIYAKDEGEILFLGKPVNFKTSKEALENGISMVHQELNLVRQRNVMDNLWLGRYPLKGVFVDHTKMYNDTKAIFDELDIDIDPREKVANLSVSQMQMIEIAKAFSYNAKIVIMDEPTSSLSEKEVEHLFKIIEKLKDRGCGIVYISHKMDEIFKICDEITILRDGKWINTVPVKGSTMEQIVAMMVGRELTQRFPPKINEPKEVILEVEHLTALNQPSIQDINFELRKGEILGIAGLVGAKRTDIVETIFGVRERKSGTVKLHGKIMKNRTALEAINNGFALVTEERRSTGIYANLSIEFNSLISNMKSYMNKWGLLSDKKMKSDTQWVIDSMNVKTPSHKTTIGSLSGGNQQKVVIGRWLLTQPEILMLDEPTRGIDVGAKYEIYQLIMQLAQKDKGIIMISSEMPELLGITDRILVMSNGKVAGIVETAKTSQEEILQLAAKYL.

2 consecutive ABC transporter domains span residues 14–249 and 264–506; these read LTMT…VGRE and VILE…AKYL. 46–53 contacts ATP; it reads GENGAGKS.

The protein belongs to the ABC transporter superfamily. Galactose/methyl galactoside importer (TC 3.A.1.2.3) family. The complex is composed of one ATP-binding protein (MglA), two transmembrane proteins (MglC) and a solute-binding protein (MglB).

Its subcellular location is the cell inner membrane. The catalysed reaction is D-galactose(out) + ATP + H2O = D-galactose(in) + ADP + phosphate + H(+). It catalyses the reaction methyl beta-D-galactoside(out) + ATP + H2O = methyl beta-D-galactoside(in) + ADP + phosphate + H(+). Functionally, part of the ABC transporter complex MglABC involved in galactose/methyl galactoside import. Responsible for energy coupling to the transport system. This chain is Galactose/methyl galactoside import ATP-binding protein MglA, found in Mannheimia succiniciproducens (strain KCTC 0769BP / MBEL55E).